A 299-amino-acid chain; its full sequence is Ankyrin repeat domain-containing protein 54 (299 aa).

The disordered stretch occupies residues 1–27 (MAATGGGADDESRSGRSSSDGECAVAP). Ala-2 is subject to N-acetylalanine. Ser-62 bears the Phosphoserine mark. A Nuclear localization signal (NLS) motif is present at residues 98–116 (RRLGPTGKEVHALKRLRDS). 4 ANK repeats span residues 108 to 137 (HALK…DPCA), 141 to 170 (KGRT…DPNQ), 174 to 203 (LGNT…RVDA), and 207 to 239 (AGRT…EVKQ). Residues 140 to 240 (DKGRTALHFA…EAVRLEVKQI (101 aa)) are LYN-binding. Positions 282–292 (LLASFTSLSLQ) match the Nuclear export signal (NES) motif.

As to quaternary structure, interacts (via ankyrin repeat region) with LYN (via SH3-domain) in an activation-independent status of LYN. Forms a multiprotein complex with LYN and HCLS1. Interacts with TSN2, VAV1, DBNL and LASP1. As to expression, expressed in a variety of hemopoietic cell lines and tissue with high levels in testis. Highly expressed in ciliated cells.

It localises to the nucleus. The protein localises to the cytoplasm. The protein resides in the midbody. Its function is as follows. Plays an important role in regulating intracellular signaling events associated with erythroid terminal differentiation. The sequence is that of Ankyrin repeat domain-containing protein 54 (Ankrd54) from Mus musculus (Mouse).